The sequence spans 665 residues: Probable arginine--tRNA ligase, cytoplasmic (665 aa).

Residues 204–206, His215, Tyr390, Asp394, and Gln418 contribute to the L-arginine site; that span reads SPN. The short motif at 205–216 is the 'HIGH' region element; it reads PNIAKQMHVGHL. The interaction with tRNA stretch occupies residues 535-549; it reads NTAVYLLYTYTRICS.

Belongs to the class-I aminoacyl-tRNA synthetase family.

The protein resides in the cytoplasm. It localises to the cytosol. The enzyme catalyses tRNA(Arg) + L-arginine + ATP = L-arginyl-tRNA(Arg) + AMP + diphosphate. In terms of biological role, forms part of a macromolecular complex that catalyzes the attachment of specific amino acids to cognate tRNAs during protein synthesis. The polypeptide is Probable arginine--tRNA ligase, cytoplasmic (Drosophila melanogaster (Fruit fly)).